The following is a 435-amino-acid chain: GTPase Der (435 aa).

2 EngA-type G domains span residues 3–168 (PLVA…PDET) and 176–351 (IKLA…QNRQ). GTP-binding positions include 9–16 (GRPNVGKS), 56–60 (DTGGY), 120–123 (NKVE), 182–189 (GRPNVGKS), 229–233 (DTAGL), and 294–297 (NKWD). A KH-like domain is found at 352-435 (KKISTSELNR…VPVSFRYRKK (84 aa)).

It belongs to the TRAFAC class TrmE-Era-EngA-EngB-Septin-like GTPase superfamily. EngA (Der) GTPase family. In terms of assembly, associates with the 50S ribosomal subunit.

Functionally, GTPase that plays an essential role in the late steps of ribosome biogenesis. The sequence is that of GTPase Der from Chlorobium phaeobacteroides (strain BS1).